The primary structure comprises 901 residues: Putative receptor protein kinase CRINKLY4 (901 aa).

The N-terminal stretch at 1–24 (MDHVPALVLAGCCFLALLPGWACG) is a signal peptide. The Extracellular portion of the chain corresponds to 25-423 (LGSMSSIAVS…SRKLMAFQMR (399 aa)). 7 consecutive repeat copies span residues 33 to 68 (VSYG…GAPP), 72 to 107 (FLGL…GVPQ), 125 to 160 (LCAL…AVDE), 162 to 195 (VSTV…GVVG), 203 to 236 (FQSI…QVVP), 253 to 287 (MSTV…TSPP), and 292 to 330 (MYAL…AVPP). Residues 33-330 (VSYGEDGPVF…PLALPMAVPP (298 aa)) are 7 X 36 AA repeats. Asn-151 and Asn-179 each carry an N-linked (GlcNAc...) asparagine glycan. An N-linked (GlcNAc...) asparagine glycan is attached at Asn-282. Disulfide bonds link Cys-338/Cys-365, Cys-368/Cys-382, and Cys-372/Cys-390. A TNFR-Cys repeat occupies 357 to 391 (CKPANSRLCLPCSTGCPEGLYESSPCNATADRVCQ). Asn-383 carries N-linked (GlcNAc...) asparagine glycosylation. Residues 424–444 (IFVAEIVFAVVLVLSVSVTTC) traverse the membrane as a helical segment. The Cytoplasmic portion of the chain corresponds to 445 to 901 (LYVRHKLRHC…QENLYLQHNF (457 aa)). Residues 505–712 (FSEDSQVGKG…EILSGRKAID (208 aa)) enclose the Protein kinase domain. ATP-binding positions include 511-519 (VGKGSFSCV) and Lys-533. The Proton acceptor role is filled by Asp-634. Positions 845-876 (VTSSQRRKSSASEADIVGRRATDGRNVGSSIG) are disordered.

The protein belongs to the protein kinase superfamily. Ser/Thr protein kinase family. In terms of assembly, homodimer.

Its subcellular location is the cell membrane. The protein localises to the endosome. It localises to the multivesicular body membrane. The enzyme catalyses L-seryl-[protein] + ATP = O-phospho-L-seryl-[protein] + ADP + H(+). It catalyses the reaction L-threonyl-[protein] + ATP = O-phospho-L-threonyl-[protein] + ADP + H(+). Functionally, putative receptor protein kinase. Could play a role in a differentiation signal. The CRINKLY4 (CR4) mutation affects leaf epidermis differentiation such that cell size and morphology are altered, and surface functions are compromised, allowing graft-like fusions between organs. In Zea mays (Maize), this protein is Putative receptor protein kinase CRINKLY4 (CR4).